Here is a 128-residue protein sequence, read N- to C-terminus: Transcription antitermination protein NusB (128 aa).

This sequence belongs to the NusB family.

Functionally, involved in transcription antitermination. Required for transcription of ribosomal RNA (rRNA) genes. Binds specifically to the boxA antiterminator sequence of the ribosomal RNA (rrn) operons. The polypeptide is Transcription antitermination protein NusB (Listeria welshimeri serovar 6b (strain ATCC 35897 / DSM 20650 / CCUG 15529 / CIP 8149 / NCTC 11857 / SLCC 5334 / V8)).